We begin with the raw amino-acid sequence, 429 residues long: Xaa-Pro dipeptidase (429 aa).

Positions 241, 252, 334, 372, and 411 each coordinate Mn(2+).

Belongs to the peptidase M24B family. Bacterial-type prolidase subfamily. The cofactor is Mn(2+).

The catalysed reaction is Xaa-L-Pro dipeptide + H2O = an L-alpha-amino acid + L-proline. Its function is as follows. Splits dipeptides with a prolyl residue in the C-terminal position. This is Xaa-Pro dipeptidase from Marinobacter nauticus (strain ATCC 700491 / DSM 11845 / VT8) (Marinobacter aquaeolei).